Reading from the N-terminus, the 854-residue chain is Probable inactive serine/threonine-protein kinase DDB_G0274821 (854 aa).

Positions 1 to 266 (MPIKESFKRI…WPKLFIHPFF (266 aa)) constitute a Protein kinase domain. N-linked (GlcNAc...) asparagine glycans are attached at residues Asn32 and Asn106. Positions 116–135 (NNNNNNNNNNNNNNNNNNNN) are disordered. Residues Asn163, Asn279, Asn283, and Asn290 are each glycosylated (N-linked (GlcNAc...) asparagine). The interval 289–331 (LNKSSSSSSSSSSSSSSSSSSSSSSSLSFQQQQQPNNISSPNL) is disordered. The span at 292 to 322 (SSSSSSSSSSSSSSSSSSSSSSSLSFQQQQQ) shows a compositional bias: low complexity. N-linked (GlcNAc...) asparagine glycosylation is found at Asn325, Asn347, and Asn365. Residues 384 to 408 (IISPNRPSSPPLSSLSSCSSSSSSS) form a disordered region. The N-linked (GlcNAc...) asparagine glycan is linked to Asn414. The disordered stretch occupies residues 425-446 (NNNNNNNNNNNNNNNNNNNNNN). N-linked (GlcNAc...) asparagine glycans are attached at residues Asn520, Asn541, and Asn620. Residues 627–650 (SSPPPSSSSSSSSPSSPSSTSPSL) are disordered. Residues 633 to 650 (SSSSSSSPSSPSSTSPSL) show a composition bias toward low complexity. Residue Asn757 is glycosylated (N-linked (GlcNAc...) asparagine). The helical transmembrane segment at 770 to 792 (HWRVQISFLNILFILITINNNFI) threads the bilayer.

The protein belongs to the protein kinase superfamily. Ser/Thr protein kinase family.

The protein resides in the membrane. This Dictyostelium discoideum (Social amoeba) protein is Probable inactive serine/threonine-protein kinase DDB_G0274821.